A 244-amino-acid chain; its full sequence is Phosphoadenosine 5'-phosphosulfate reductase (244 aa).

C239 serves as the catalytic Nucleophile; cysteine thiosulfonate intermediate.

This sequence belongs to the PAPS reductase family. CysH subfamily.

It localises to the cytoplasm. It carries out the reaction [thioredoxin]-disulfide + sulfite + adenosine 3',5'-bisphosphate + 2 H(+) = [thioredoxin]-dithiol + 3'-phosphoadenylyl sulfate. Its pathway is sulfur metabolism; hydrogen sulfide biosynthesis; sulfite from sulfate: step 3/3. In terms of biological role, catalyzes the formation of sulfite from phosphoadenosine 5'-phosphosulfate (PAPS) using thioredoxin as an electron donor. The polypeptide is Phosphoadenosine 5'-phosphosulfate reductase (Escherichia coli O6:K15:H31 (strain 536 / UPEC)).